Consider the following 549-residue polypeptide: MSEVKQCDVVVIGAGHNGLTTGAYLARAGAKVLVVERRHETGGALVTEEFSGFRFNLHATYMMMLDVAPPYKDLGLEADGCVYIRPDVAASILKKDGTAVTLHGDLEKSVESIRRISPRDAERFREIYLEYKQMSDEYLIPATYGKPVGSAQLAGTYMETELGKKILEVSELTPYQICQSWGFETPELGALLLYLICMWGIDPTETNSSYLVPLYFNRMLNATLVRGGSHRLSSTLQKAGILAGMEVMENHEVKRIIMEDGAAVGVEVAPTGTDGPLIRIDAKSIVTSTDPTTTFGTFISEEEMQQRSKLCLNTARNWEWEHSSLFLCHLGLRKKPRFKAEDQDPAVQTAFIRVFGVESPEDVVKHFNEVMEGHLLHDIGHVTFTTDLDPNQAPQETEPGSAVARIEAVVPYAPAQGDWADVAGPYGDRLIAKLAEYMVDFDPADIIRRYQYTPVYIEMKIPQMKRGSFKHGAYVMTQMGYSRPNVQCSSNKTPIKGLYVCGASTFPGGMITFGGGYNAAKTVAQDMGLNIWWTEPDEVIAAREKGLLL.

Belongs to the carotenoid/retinoid oxidoreductase family. In terms of assembly, heterodimer composed of CtmA and CtmB. The cofactor is FAD.

It localises to the cytoplasm. The enzyme catalyses (4S)-limonene + A + H2O = (4S)-perillyl alcohol + AH2. The catalysed reaction is (4R)-limonene + A + H2O = (4R)-perillyl alcohol + AH2. Its pathway is terpene metabolism; monoterpene degradation. Its activity is regulated as follows. The presence of molecular oxygen causes a 40% reduction in specific activity. Functionally, involved in the degradation of the cyclic monoterpene limonene. Catalyzes the oxidation of limonene at the primary methyl group, forming perillyl alcohol. Hydroxylates the R- and S-enantiomers to their respective enantiomeric form of perillyl alcohol at a similar rate. Native CtmAB oxidizes a wide range of monocyclic monoterpenes containing the allylic methyl group motif (1-methyl-cyclohex-1-ene). Can also catalyze the reverse reaction, the reduction of perillyl alcohol to limonene, but with lower efficiency. Cannot use molecular oxygen as an electron acceptor. The natural electron acceptor is likely a heterodimeric electron transfer flavoprotein (ETF). This is Limonene dehydrogenase subunit B from Castellaniella defragrans (strain DSM 12143 / CCUG 39792 / 65Phen) (Alcaligenes defragrans).